The following is a 155-amino-acid chain: Ribosome maturation factor RimP (155 aa).

Belongs to the RimP family.

The protein localises to the cytoplasm. Its function is as follows. Required for maturation of 30S ribosomal subunits. This chain is Ribosome maturation factor RimP, found in Staphylococcus aureus (strain bovine RF122 / ET3-1).